The primary structure comprises 72 residues: Large ribosomal subunit protein bL31 (72 aa).

Residues Cys-16, Cys-18, Cys-36, and Cys-39 each contribute to the Zn(2+) site.

This sequence belongs to the bacterial ribosomal protein bL31 family. Type A subfamily. In terms of assembly, part of the 50S ribosomal subunit. Requires Zn(2+) as cofactor.

Binds the 23S rRNA. In Geobacter sp. (strain M21), this protein is Large ribosomal subunit protein bL31.